A 293-amino-acid chain; its full sequence is Bifunctional protein FolD (293 aa).

NADP(+)-binding positions include 164 to 166, S193, and T234; that span reads GRS.

The protein belongs to the tetrahydrofolate dehydrogenase/cyclohydrolase family. As to quaternary structure, homodimer.

The enzyme catalyses (6R)-5,10-methylene-5,6,7,8-tetrahydrofolate + NADP(+) = (6R)-5,10-methenyltetrahydrofolate + NADPH. It catalyses the reaction (6R)-5,10-methenyltetrahydrofolate + H2O = (6R)-10-formyltetrahydrofolate + H(+). It functions in the pathway one-carbon metabolism; tetrahydrofolate interconversion. Catalyzes the oxidation of 5,10-methylenetetrahydrofolate to 5,10-methenyltetrahydrofolate and then the hydrolysis of 5,10-methenyltetrahydrofolate to 10-formyltetrahydrofolate. The polypeptide is Bifunctional protein FolD (Bacteroides fragilis (strain ATCC 25285 / DSM 2151 / CCUG 4856 / JCM 11019 / LMG 10263 / NCTC 9343 / Onslow / VPI 2553 / EN-2)).